Here is an 877-residue protein sequence, read N- to C-terminus: GTPase activating protein homolog 2 (877 aa).

The region spanning 14–285 is the F-BAR domain; sequence FKFTDNLWDG…SVEMIDITND (272 aa). A coiled-coil region spans residues 130–214; it reads QEGIKLKQDM…SNCDEEYREQ (85 aa). Positions 374-560 constitute a Rho-GAP domain; that stretch reads VSLDELMNRQ…TLIKQIPPPL (187 aa). 3 disordered regions span residues 589–612, 644–704, and 749–800; these read DQLS…GSGS, LPPL…AEPT, and AATP…LAST. 3 stretches are compositionally biased toward low complexity: residues 593 to 612, 653 to 676, and 749 to 779; these read NDDN…GSGS, SGSG…SPTT, and AATP…STST. Residues 780–800 are compositionally biased toward polar residues; it reads IKTSSPDRTTPLTSSPPLAST.

It localises to the cytoplasm. The protein resides in the contractile vacuole. Its function is as follows. Rho GTPase-activating protein involved in the signal transduction pathway. Regulator of the contractile vacuole network as well as involved in driving vacuole emptying. The protein is GTPase activating protein homolog 2 (mgp2) of Dictyostelium discoideum (Social amoeba).